The chain runs to 783 residues: Lon protease (783 aa).

Positions 16-210 (LPLLASRGVV…KLLEIIKDEI (195 aa)) constitute a Lon N-terminal domain. 361 to 368 (GAPGVGKT) is a binding site for ATP. The Lon proteolytic domain occupies 597-778 (KDRVGVATGM…DQVLDLILGG (182 aa)). Catalysis depends on residues serine 684 and lysine 727.

Belongs to the peptidase S16 family. As to quaternary structure, homohexamer. Organized in a ring with a central cavity.

It is found in the cytoplasm. It catalyses the reaction Hydrolysis of proteins in presence of ATP.. Functionally, ATP-dependent serine protease that mediates the selective degradation of mutant and abnormal proteins as well as certain short-lived regulatory proteins. Required for cellular homeostasis and for survival from DNA damage and developmental changes induced by stress. Degrades polypeptides processively to yield small peptide fragments that are 5 to 10 amino acids long. Binds to DNA in a double-stranded, site-specific manner. In Halothermothrix orenii (strain H 168 / OCM 544 / DSM 9562), this protein is Lon protease.